The chain runs to 299 residues: ATP phosphoribosyltransferase (299 aa).

The protein belongs to the ATP phosphoribosyltransferase family. Long subfamily. Equilibrium between an active dimeric form, an inactive hexameric form and higher aggregates. Interconversion between the various forms is largely reversible and is influenced by the natural substrates and inhibitors of the enzyme. The cofactor is Mg(2+).

It is found in the cytoplasm. The enzyme catalyses 1-(5-phospho-beta-D-ribosyl)-ATP + diphosphate = 5-phospho-alpha-D-ribose 1-diphosphate + ATP. It functions in the pathway amino-acid biosynthesis; L-histidine biosynthesis; L-histidine from 5-phospho-alpha-D-ribose 1-diphosphate: step 1/9. Its activity is regulated as follows. Feedback inhibited by histidine. Its function is as follows. Catalyzes the condensation of ATP and 5-phosphoribose 1-diphosphate to form N'-(5'-phosphoribosyl)-ATP (PR-ATP). Has a crucial role in the pathway because the rate of histidine biosynthesis seems to be controlled primarily by regulation of HisG enzymatic activity. The sequence is that of ATP phosphoribosyltransferase from Escherichia coli O157:H7.